Here is a 188-residue protein sequence, read N- to C-terminus: dITP/XTP pyrophosphatase (188 aa).

T10–K15 lines the substrate pocket. Residues E39 and D69 each coordinate Mg(2+). Catalysis depends on D69, which acts as the Proton acceptor. Substrate is bound by residues S70, F145–D148, K168, and H173–R174.

This sequence belongs to the HAM1 NTPase family. In terms of assembly, homodimer. It depends on Mg(2+) as a cofactor.

The enzyme catalyses XTP + H2O = XMP + diphosphate + H(+). The catalysed reaction is dITP + H2O = dIMP + diphosphate + H(+). It carries out the reaction ITP + H2O = IMP + diphosphate + H(+). Functionally, pyrophosphatase that catalyzes the hydrolysis of nucleoside triphosphates to their monophosphate derivatives, with a high preference for the non-canonical purine nucleotides XTP (xanthosine triphosphate), dITP (deoxyinosine triphosphate) and ITP. Seems to function as a house-cleaning enzyme that removes non-canonical purine nucleotides from the nucleotide pool, thus preventing their incorporation into DNA/RNA and avoiding chromosomal lesions. The chain is dITP/XTP pyrophosphatase from Ignicoccus hospitalis (strain KIN4/I / DSM 18386 / JCM 14125).